A 500-amino-acid polypeptide reads, in one-letter code: E3 ubiquitin-protein ligase TRIM4 (500 aa).

An RING-type zinc finger spans residues 12-53; the sequence is CPICLDYFQDPVSIECGHNFCRGCLHRNWAPGGGPFPCPECR. Residues 82 to 123 form a B box-type zinc finger; the sequence is VPPGLCGRHWEPLRLFCEDDQRPVCLVCRESQEHQTHAMAPI. Positions 87, 90, 109, and 115 each coordinate Zn(2+). Residues 212–253 are a coiled coil; that stretch reads EEEDLFLQRLNKEEEETKKKLNENTLKLNQTIASLKKLILEV. A B30.2/SPRY domain is found at 288 to 500; that stretch reads KVKTVCQIPL…LVIPPVTDRK (213 aa).

The protein belongs to the TRIM/RBCC family. As to quaternary structure, homotrimer.

The protein resides in the cytoplasm. The enzyme catalyses S-ubiquitinyl-[E2 ubiquitin-conjugating enzyme]-L-cysteine + [acceptor protein]-L-lysine = [E2 ubiquitin-conjugating enzyme]-L-cysteine + N(6)-ubiquitinyl-[acceptor protein]-L-lysine.. It participates in protein modification; protein ubiquitination. In terms of biological role, E3 ubiquitin-protein ligase. Mediates 'Lys-63'-linked polyubiquitination of the innate immune receptor RIGI, this linkage doesn't lead to proteasomal degradation but seems to enhance IFN induction. This chain is E3 ubiquitin-protein ligase TRIM4 (TRIM4), found in Homo sapiens (Human).